We begin with the raw amino-acid sequence, 177 residues long: Large ribosomal subunit protein uL6 (177 aa).

Belongs to the universal ribosomal protein uL6 family. In terms of assembly, part of the 50S ribosomal subunit.

This protein binds to the 23S rRNA, and is important in its secondary structure. It is located near the subunit interface in the base of the L7/L12 stalk, and near the tRNA binding site of the peptidyltransferase center. This Ectopseudomonas mendocina (strain ymp) (Pseudomonas mendocina) protein is Large ribosomal subunit protein uL6.